An 829-amino-acid polypeptide reads, in one-letter code: Probable beta-glucosidase H (829 aa).

Asn-13 is a glycosylation site (N-linked (GlcNAc...) asparagine). Residue Asp-225 is part of the active site. N-linked (GlcNAc...) asparagine glycans are attached at residues Asn-304, Asn-473, Asn-602, Asn-627, and Asn-664. The PA14 domain maps to 389-548; the sequence is RMLSNAVIHF…DPEQMVANAV (160 aa).

The protein belongs to the glycosyl hydrolase 3 family.

It is found in the secreted. It catalyses the reaction Hydrolysis of terminal, non-reducing beta-D-glucosyl residues with release of beta-D-glucose.. Its pathway is glycan metabolism; cellulose degradation. Its function is as follows. Beta-glucosidases are one of a number of cellulolytic enzymes involved in the degradation of cellulosic biomass. Catalyzes the last step releasing glucose from the inhibitory cellobiose. This chain is Probable beta-glucosidase H (bglH), found in Aspergillus fumigatus (strain ATCC MYA-4609 / CBS 101355 / FGSC A1100 / Af293) (Neosartorya fumigata).